The chain runs to 165 residues: MNAEINPLHAYFKLPNTVSLVAGSSEGETPLNAFDGALLNAGIGNVNLIRISSIMPPEAEIVPLPKLPMGALVPTAYGYIISDVPGETISAAISVAIPKDKSLCGLIMEYEGKCSKKEAEKTVREMAKIGFEMRGWELDRIESIAVEHTVEKLGCAFAAAALWYK.

Serine 53 carries the post-translational modification Pyruvic acid (Ser).

The protein belongs to the PdaD family. As to quaternary structure, trimer of an alpha-beta dimer. Requires pyruvate as cofactor.

The enzyme catalyses L-arginine + H(+) = agmatine + CO2. The chain is Pyruvoyl-dependent arginine decarboxylase (pdaD) from Methanocaldococcus jannaschii (strain ATCC 43067 / DSM 2661 / JAL-1 / JCM 10045 / NBRC 100440) (Methanococcus jannaschii).